Consider the following 940-residue polypeptide: Inter-alpha-trypsin inhibitor heavy chain H5 (940 aa).

Residues 1–16 form the signal peptide; it reads MLPLLGLCFALPLCAG. Positions 35-161 constitute a VIT domain; the sequence is IPRQVRLLQR…KAAFLLSYEE (127 aa). N-linked (GlcNAc...) asparagine glycans are attached at residues Asn-97 and Asn-127. The disordered stretch occupies residues 207-227; the sequence is NSRQRGSGRGPDDSGPPPSTV. 6 N-linked (GlcNAc...) asparagine glycosylation sites follow: Asn-231, Asn-421, Asn-508, Asn-694, Asn-778, and Asn-795. Residues 295-478 enclose the VWFA domain; the sequence is NVVFVLDSSA…AQLIGFYDEI (184 aa).

It belongs to the ITIH family.

It localises to the secreted. Functionally, may act as a tumor suppressor. This is Inter-alpha-trypsin inhibitor heavy chain H5 (ITIH5) from Bos taurus (Bovine).